A 776-amino-acid polypeptide reads, in one-letter code: Lysyl oxidase homolog 2 (776 aa).

Residues 1–25 (MEIPFGSCLYSCLALLVLLPSLSLA) form the signal peptide. SRCR domains lie at 61–162 (VRLA…VVCS), 191–305 (IRPI…VSCV), 329–428 (VRLR…VRCN), and 438–546 (VRLN…VACS). Intrachain disulfides connect Cys87/Cys151, Cys100/Cys161, Cys131/Cys141, Cys221/Cys294, Cys234/Cys304, Cys268/Cys278, Cys354/Cys417, Cys367/Cys427, and Cys398/Cys408. A glycan (N-linked (GlcNAc...) asparagine) is linked at Asn267. A glycan (N-linked (GlcNAc...) asparagine) is linked at Asn291. Asn458 carries N-linked (GlcNAc...) asparagine glycosylation. 3 cysteine pairs are disulfide-bonded: Cys467–Cys532, Cys480–Cys545, and Cys514–Cys524. The lysyl-oxidase like stretch occupies residues 550 to 753 (PDLVLNAEIV…WMYNCHVGGA (204 aa)). Asp551 and Leu552 together coordinate Ca(2+). 4 disulfide bridges follow: Cys575/Cys627, Cys581/Cys697, Cys659/Cys675, and Cys665/Cys687. Positions 628, 630, and 632 each coordinate Cu cation. N-linked (GlcNAc...) asparagine glycosylation is present at Asn646. Residues 655–691 (KASFCLEDTECEGDIQKSYECANFGEQGITMGCWDMY) constitute a cross-link (lysine tyrosylquinone (Lys-Tyr)). Tyr691 is modified (2',4',5'-topaquinone). Positions 724, 726, 729, and 730 each coordinate Ca(2+). Cys734 and Cys748 are joined by a disulfide.

The protein belongs to the lysyl oxidase family. In terms of assembly, component of some chromatin repressor complex. Interacts with SNAI1. Interacts with TAF10. Interacts with HSPA5. Interacts with EFEMP2. It depends on Cu cation as a cofactor. Requires lysine tyrosylquinone residue as cofactor. In terms of processing, the lysine tyrosylquinone cross-link (LTQ) is generated by condensation of the epsilon-amino group of a lysine with a topaquinone produced by oxidation of tyrosine. N-glycosylated. N-glycosylation on Asn-458 and Asn-646 may be essential for proper folding and secretion; may be composed of a fucosylated carbohydrates attached to a trimannose N-linked glycan core.

Its subcellular location is the secreted. It localises to the extracellular space. The protein localises to the extracellular matrix. It is found in the basement membrane. The protein resides in the nucleus. Its subcellular location is the chromosome. It localises to the endoplasmic reticulum. It carries out the reaction L-lysyl-[protein] + O2 + H2O = (S)-2-amino-6-oxohexanoyl-[protein] + H2O2 + NH4(+). With respect to regulation, specifically inhibited by a mouse monoclonal antibody AB0023, inhibition occurs in a non-competitive manner. In terms of biological role, mediates the post-translational oxidative deamination of lysine residues on target proteins leading to the formation of deaminated lysine (allysine). Acts as a transcription corepressor and specifically mediates deamination of trimethylated 'Lys-4' of histone H3 (H3K4me3), a specific tag for epigenetic transcriptional activation. Shows no activity against histone H3 when it is trimethylated on 'Lys-9' (H3K9me3) or 'Lys-27' (H3K27me3) or when 'Lys-4' is monomethylated (H3K4me1) or dimethylated (H3K4me2). Also mediates deamination of methylated TAF10, a member of the transcription factor IID (TFIID) complex, which induces release of TAF10 from promoters, leading to inhibition of TFIID-dependent transcription. LOXL2-mediated deamination of TAF10 results in transcriptional repression of genes required for embryonic stem cell pluripotency including POU5F1/OCT4, NANOG, KLF4 and SOX2. Involved in epithelial to mesenchymal transition (EMT) via interaction with SNAI1 and participates in repression of E-cadherin CDH1, probably by mediating deamination of histone H3. During EMT, involved with SNAI1 in negatively regulating pericentromeric heterochromatin transcription. SNAI1 recruits LOXL2 to pericentromeric regions to oxidize histone H3 and repress transcription which leads to release of heterochromatin component CBX5/HP1A, enabling chromatin reorganization and acquisition of mesenchymal traits. Interacts with the endoplasmic reticulum protein HSPA5 which activates the IRE1-XBP1 pathway of the unfolded protein response, leading to expression of several transcription factors involved in EMT and subsequent EMT induction. When secreted into the extracellular matrix, promotes cross-linking of extracellular matrix proteins by mediating oxidative deamination of peptidyl lysine residues in precursors to fibrous collagen and elastin. Acts as a regulator of sprouting angiogenesis, probably via collagen IV scaffolding. Acts as a regulator of chondrocyte differentiation, probably by regulating expression of factors that control chondrocyte differentiation. This chain is Lysyl oxidase homolog 2 (Loxl2), found in Rattus norvegicus (Rat).